A 150-amino-acid polypeptide reads, in one-letter code: D-aminoacyl-tRNA deacylase (150 aa).

The Gly-cisPro motif, important for rejection of L-amino acids motif lies at 138 to 139 (GP).

It belongs to the DTD family. In terms of assembly, homodimer.

It localises to the cytoplasm. It carries out the reaction glycyl-tRNA(Ala) + H2O = tRNA(Ala) + glycine + H(+). The catalysed reaction is a D-aminoacyl-tRNA + H2O = a tRNA + a D-alpha-amino acid + H(+). An aminoacyl-tRNA editing enzyme that deacylates mischarged D-aminoacyl-tRNAs. Also deacylates mischarged glycyl-tRNA(Ala), protecting cells against glycine mischarging by AlaRS. Acts via tRNA-based rather than protein-based catalysis; rejects L-amino acids rather than detecting D-amino acids in the active site. By recycling D-aminoacyl-tRNA to D-amino acids and free tRNA molecules, this enzyme counteracts the toxicity associated with the formation of D-aminoacyl-tRNA entities in vivo and helps enforce protein L-homochirality. The protein is D-aminoacyl-tRNA deacylase of Petrotoga mobilis (strain DSM 10674 / SJ95).